The following is a 415-amino-acid chain: Serine hydroxymethyltransferase 3 (415 aa).

(6S)-5,6,7,8-tetrahydrofolate is bound by residues Leu-122 and 126–128 (GHL). Lys-230 carries the post-translational modification N6-(pyridoxal phosphate)lysine.

Belongs to the SHMT family. Homodimer. Pyridoxal 5'-phosphate serves as cofactor.

The protein localises to the cytoplasm. The enzyme catalyses (6R)-5,10-methylene-5,6,7,8-tetrahydrofolate + glycine + H2O = (6S)-5,6,7,8-tetrahydrofolate + L-serine. It functions in the pathway one-carbon metabolism; tetrahydrofolate interconversion. The protein operates within amino-acid biosynthesis; glycine biosynthesis; glycine from L-serine: step 1/1. Functionally, catalyzes the reversible interconversion of serine and glycine with tetrahydrofolate (THF) serving as the one-carbon carrier. This reaction serves as the major source of one-carbon groups required for the biosynthesis of purines, thymidylate, methionine, and other important biomolecules. Also exhibits THF-independent aldolase activity toward beta-hydroxyamino acids, producing glycine and aldehydes, via a retro-aldol mechanism. The protein is Serine hydroxymethyltransferase 3 of Burkholderia lata (strain ATCC 17760 / DSM 23089 / LMG 22485 / NCIMB 9086 / R18194 / 383).